We begin with the raw amino-acid sequence, 182 residues long: Lipoprotein signal peptidase (182 aa).

Helical transmembrane passes span 12-32 (VAVF…TKAW), 68-88 (ATWV…VAGV), and 91-111 (ISMK…GNLI). Active-site residues include Asp127 and Asp140. The chain crosses the membrane as a helical span at residues 135–155 (VGNVADIYLVVAGVVLVILIL).

It belongs to the peptidase A8 family.

It localises to the cell membrane. It carries out the reaction Release of signal peptides from bacterial membrane prolipoproteins. Hydrolyzes -Xaa-Yaa-Zaa-|-(S,diacylglyceryl)Cys-, in which Xaa is hydrophobic (preferably Leu), and Yaa (Ala or Ser) and Zaa (Gly or Ala) have small, neutral side chains.. It functions in the pathway protein modification; lipoprotein biosynthesis (signal peptide cleavage). Functionally, this protein specifically catalyzes the removal of signal peptides from prolipoproteins. This Bifidobacterium longum subsp. infantis (strain ATCC 15697 / DSM 20088 / JCM 1222 / NCTC 11817 / S12) protein is Lipoprotein signal peptidase.